A 317-amino-acid chain; its full sequence is Acetylglutamate kinase (317 aa).

Residues G75 to G76, R97, and N196 contribute to the substrate site.

This sequence belongs to the acetylglutamate kinase family. ArgB subfamily.

The protein resides in the cytoplasm. The catalysed reaction is N-acetyl-L-glutamate + ATP = N-acetyl-L-glutamyl 5-phosphate + ADP. It functions in the pathway amino-acid biosynthesis; L-arginine biosynthesis; N(2)-acetyl-L-ornithine from L-glutamate: step 2/4. In terms of biological role, catalyzes the ATP-dependent phosphorylation of N-acetyl-L-glutamate. The chain is Acetylglutamate kinase from Corynebacterium jeikeium (strain K411).